The following is a 147-amino-acid chain: D-aminoacyl-tRNA deacylase (147 aa).

The short motif at 136–137 (GP) is the Gly-cisPro motif, important for rejection of L-amino acids element.

The protein belongs to the DTD family. As to quaternary structure, homodimer.

The protein resides in the cytoplasm. The enzyme catalyses glycyl-tRNA(Ala) + H2O = tRNA(Ala) + glycine + H(+). It carries out the reaction a D-aminoacyl-tRNA + H2O = a tRNA + a D-alpha-amino acid + H(+). Its function is as follows. An aminoacyl-tRNA editing enzyme that deacylates mischarged D-aminoacyl-tRNAs. Also deacylates mischarged glycyl-tRNA(Ala), protecting cells against glycine mischarging by AlaRS. Acts via tRNA-based rather than protein-based catalysis; rejects L-amino acids rather than detecting D-amino acids in the active site. By recycling D-aminoacyl-tRNA to D-amino acids and free tRNA molecules, this enzyme counteracts the toxicity associated with the formation of D-aminoacyl-tRNA entities in vivo and helps enforce protein L-homochirality. The chain is D-aminoacyl-tRNA deacylase from Persephonella marina (strain DSM 14350 / EX-H1).